The sequence spans 437 residues: ATP-dependent protease ATPase subunit HslU (437 aa).

Residues V18, 60-65 (GCGKTE), D250, E315, and R387 contribute to the ATP site.

It belongs to the ClpX chaperone family. HslU subfamily. As to quaternary structure, a double ring-shaped homohexamer of HslV is capped on each side by a ring-shaped HslU homohexamer. The assembly of the HslU/HslV complex is dependent on binding of ATP.

Its subcellular location is the cytoplasm. Functionally, ATPase subunit of a proteasome-like degradation complex; this subunit has chaperone activity. The binding of ATP and its subsequent hydrolysis by HslU are essential for unfolding of protein substrates subsequently hydrolyzed by HslV. HslU recognizes the N-terminal part of its protein substrates and unfolds these before they are guided to HslV for hydrolysis. This Methylobacterium sp. (strain 4-46) protein is ATP-dependent protease ATPase subunit HslU.